The sequence spans 559 residues: Tissue-type plasminogen activator (559 aa).

Residues 1 to 17 (MKGELLCVLLLCGVAFT) form the signal peptide. Residues 18–29 (LPDQGIHRRFRR) constitute a propeptide that is removed on maturation. A propeptide spans 30 to 32 (GAR) (removed by plasmin). Positions 36 to 78 (ATCRDEQTQTTYQQHQSWLRPMLRGNRVEYCRCNSGLAQCHSV) constitute a Fibronectin type-I domain. 17 cysteine pairs are disulfide-bonded: C38–C68, C66–C75, C83–C94, C88–C105, C107–C116, C124–C205, C145–C187, C176–C200, C213–C294, C234–C276, C265–C289, C297–C428, C340–C356, C348–C417, C442–C516, C474–C490, and C506–C534. Residues 39-49 (RDEQTQTTYQQ) are important for binding to annexin A2. Residues 79–117 (PVRSCSEPRCFNGGTCQQALYFSDFVCQCPDGFVGKRCD) form the EGF-like domain. 2 consecutive Kringle domains span residues 124-205 (CFEG…TPAC) and 213-294 (CYVG…MSPC). N-linked (GlcNAc...) asparagine glycosylation occurs at N149. One can recognise a Peptidase S1 domain in the interval 309 to 558 (IKGGLFTDIT…YLNWIQDNMK (250 aa)). Active-site charge relay system residues include H355 and D404. Residue N481 is glycosylated (N-linked (GlcNAc...) asparagine). Catalysis depends on S510, which acts as the Charge relay system.

The protein belongs to the peptidase S1 family. As to quaternary structure, heterodimer of chain A and chain B held by a disulfide bond. Binds to fibrin with high affinity. This interaction leads to an increase in the catalytic efficiency of the enzyme due to an increase in affinity for plasminogen. Similarly, binding to heparin increases the activation of plasminogen. Binds to annexin A2, cytokeratin-8, fibronectin and laminin. Binds to mannose receptor and the low-density lipoprotein receptor-related protein (LRP1); these proteins are involved in TPA clearance. Binds LRP1B; binding is followed by internalization and degradation. Forms heterodimer with SERPINA5. Interacts with SERPINE1. In complex with SERPINE1, interacts with SORL1. Post-translationally, the single chain, almost fully active enzyme, can be further processed into a two-chain fully active form by a cleavage after Arg-308 catalyzed by plasmin, tissue kallikrein or factor Xa.

The protein resides in the secreted. It is found in the extracellular space. The catalysed reaction is Specific cleavage of Arg-|-Val bond in plasminogen to form plasmin.. With respect to regulation, inhibited by SERPINA5. Inhibited by SERPINE1. In terms of biological role, converts the abundant, but inactive, zymogen plasminogen to plasmin by hydrolyzing a single Arg-Val bond in plasminogen. By controlling plasmin-mediated proteolysis, it plays an important role in tissue remodeling and degradation, in cell migration and many other physiopathological events. During oocyte activation, plays a role in cortical granule reaction in the zona reaction, which contributes to the block to polyspermy. The chain is Tissue-type plasminogen activator (Plat) from Rattus norvegicus (Rat).